A 338-amino-acid polypeptide reads, in one-letter code: METMRAQRLQPGVGVGGRGTLRALRPGVTGAPTSAATPPAGPPPAPPPPAPPPPPLLLAGAPGLPLPPGATGSPAVLREAVEAVVRSFAKHTQGYGRAVNVVEALQEFWQMKQSRGADLKNGALVVYEMVPSNSPPYVCYVTLPGGSCFGSFQFCPTKAEARRSAAKIALMNSVFNEHPSRRITDEFIEKSVSEALASFNGNREEADNPNTGIGAFRFMLESNKGKSMLEFQELMTVFQLLHWNGSLKAMRERQCSRQEVLAHYSHRALDDDIRHQMALDWVSREQSVPGALSRELASTERELDEARLAGKELRFHKEKKDILMLAAGQLGNMHSSSC.

Residues 1–65 (METMRAQRLQ…LLLAGAPGLP (65 aa)) are disordered. Over residues 29 to 38 (TGAPTSAATP) the composition is skewed to low complexity. The segment covering 39–56 (PAGPPPAPPPPAPPPPPL) has biased composition (pro residues).

It belongs to the LIX1 family.

This Rattus norvegicus (Rat) protein is LIX1-like protein (Lix1l).